The sequence spans 244 residues: Triosephosphate isomerase (244 aa).

N9–K11 is a binding site for substrate. H93 functions as the Electrophile in the catalytic mechanism. The active-site Proton acceptor is E160. Positions 166 and 206 each coordinate substrate.

The protein belongs to the triosephosphate isomerase family. Homodimer.

The protein localises to the cytoplasm. The catalysed reaction is D-glyceraldehyde 3-phosphate = dihydroxyacetone phosphate. It functions in the pathway carbohydrate biosynthesis; gluconeogenesis. It participates in carbohydrate degradation; glycolysis; D-glyceraldehyde 3-phosphate from glycerone phosphate: step 1/1. Functionally, involved in the gluconeogenesis. Catalyzes stereospecifically the conversion of dihydroxyacetone phosphate (DHAP) to D-glyceraldehyde-3-phosphate (G3P). The protein is Triosephosphate isomerase of Mycoplasma genitalium (strain ATCC 33530 / DSM 19775 / NCTC 10195 / G37) (Mycoplasmoides genitalium).